The chain runs to 363 residues: Ribonuclease P protein subunit p40 (363 aa).

As to quaternary structure, component of nuclear RNase P and RNase MRP ribonucleoproteins. RNase P consists of a catalytic RNA moiety and about 10 protein subunits; POP1, POP4, POP5, POP7, RPP14, RPP21, RPP25, RPP30, RPP38 and RPP40. Within the RNase P complex, POP1, POP7 and RPP25 form the 'finger' subcomplex, POP5, RPP14, RPP40 and homodimeric RPP30 form the 'palm' subcomplex, and RPP21, POP4 and RPP38 form the 'wrist' subcomplex. All subunits of the RNase P complex interact with the catalytic RNA. Several subunits of RNase P are also part of the RNase MRP complex. RNase MRP consists of a catalytic RNA moiety and about 8 protein subunits; POP1, POP7, RPP25, RPP30, RPP38, RPP40 and possibly also POP4 and POP5.

It is found in the nucleus. Its subcellular location is the nucleolus. Functionally, component of ribonuclease P, a ribonucleoprotein complex that generates mature tRNA molecules by cleaving their 5'-ends. Also a component of the MRP ribonuclease complex, which cleaves pre-rRNA sequences. This is Ribonuclease P protein subunit p40 (RPP40) from Homo sapiens (Human).